The following is a 320-amino-acid chain: Ferrochelatase (320 aa).

Fe cation contacts are provided by His-194 and Glu-275.

This sequence belongs to the ferrochelatase family.

The protein localises to the cytoplasm. The catalysed reaction is heme b + 2 H(+) = protoporphyrin IX + Fe(2+). The protein operates within porphyrin-containing compound metabolism; protoheme biosynthesis; protoheme from protoporphyrin-IX: step 1/1. Its function is as follows. Catalyzes the ferrous insertion into protoporphyrin IX. The protein is Ferrochelatase of Vibrio atlanticus (strain LGP32) (Vibrio splendidus (strain Mel32)).